A 459-amino-acid chain; its full sequence is MHNIHRRHFLKAAGAVTAGLVTANIALNANASSVAPKPRVGKSVIGLIAPKMELVRVGFIGVGERGFSHVEQFCHLEGVELKAICDTHQAVIDRAVEHIVNQNRPKPAVYTGNDLSYRELLNRDDIDIVIISTPWEWHAPMAIDTMESGKHAFVEVPLALTVEECWQLVDTAERTQKNCMMMENVNYGREELMVLNMVRQGVFGELLHGEAAYIHELRWQMKEIDHKTGSWRTYWHTKRNGNLYPTHGLGPISQYMNINRGDRFDYLTSMSSPALGRALYAKREFPADHERNQLKYINGDMSTSLIKTVKGRTIMVQHDTTTPRPYSRHNLIQGTNGVFAGFPNRIAVEHGGFGKSYHEWDMDMQKWYDKYDHPLWQRIGKEAEINGGHGGMDFVMLWRMVYCLRNGEALDQDVYDGAAWSVVNILSEQSLNNRSNSVNFPDFTRGAWEHATPLGIVGA.

Positions 1–31 (MHNIHRRHFLKAAGAVTAGLVTANIALNANA) form a signal peptide, tat-type signal. Residues 64–65 (ER), aspartate 86, 135–138 (WEWH), 155–156 (EV), and asparagine 184 contribute to the NAD(+) site. Substrate is bound by residues tyrosine 213, arginine 232, 244–247 (YPTH), and tyrosine 326. Residue tyrosine 244 coordinates NAD(+).

It belongs to the Gfo/Idh/MocA family. Glycosyl hydrolase 109 subfamily. Requires NAD(+) as cofactor. Post-translationally, predicted to be exported by the Tat system. The position of the signal peptide cleavage has not been experimentally proven.

In terms of biological role, glycosidase. The polypeptide is Glycosyl hydrolase family 109 protein 1 (Shewanella sp. (strain MR-7)).